Consider the following 316-residue polypeptide: CXXC-type zinc finger protein 5 (316 aa).

Positions 1–10 are enriched in gly residues; it reads MSSLGGGSQD. The tract at residues 1–95 is disordered; it reads MSSLGGGSQD…SGGAGSMMGG (95 aa). 2 stretches are compositionally biased toward low complexity: residues 11 to 27 and 36 to 50; these read AGGS…SGSG and SATV…VADD. The CXXC-type zinc finger occupies 250-291; the sequence is GKKKRKRCGMCAPCRRRINCEQCSSCRNRKTGHQICKFRKCE. Positions 251–256 match the Nuclear localization signal motif; that stretch reads KKKRKR. Positions 257, 260, 263, 269, 272, 275, 285, and 290 each coordinate Zn(2+).

Interacts with DVL1. Interacts with RBPJ. Expressed in neural stem cells (at protein level). Expressed in the dorsal telencephalon.

The protein resides in the nucleus. It is found in the cytoplasm. Functionally, may indirectly participate in activation of the NF-kappa-B and MAPK pathways. Required for DNA damage-induced ATM phosphorylation, p53 activation and cell cycle arrest. Involved in myelopoiesis. Acts as a mediator of BMP4-mediated modulation of canonical Wnt signaling activity in neural stem cells. Binds to the oxygen responsive element of COX4I2 and represses its transcription under hypoxia conditions (4% oxygen), as well as normoxia conditions (20% oxygen). May repress COX4I2 transactivation induced by CHCHD2 and RBPJ. Binds preferentially to DNA containing cytidine-phosphate-guanosine (CpG) dinucleotides over CpH (H=A, T, and C), hemimethylated-CpG and hemimethylated-hydroxymethyl-CpG. In Rattus norvegicus (Rat), this protein is CXXC-type zinc finger protein 5 (Cxxc5).